Reading from the N-terminus, the 873-residue chain is Valine--tRNA ligase (873 aa).

The 'HIGH' region motif lies at 43 to 53 (PNVTGVLHMGH). Residues 532-536 (KMSKS) carry the 'KMSKS' region motif. Lysine 535 is a binding site for ATP. Positions 802–873 (LGNLINVEEE…IEESIAALTK (72 aa)) form a coiled coil.

The protein belongs to the class-I aminoacyl-tRNA synthetase family. ValS type 1 subfamily. Monomer.

Its subcellular location is the cytoplasm. The enzyme catalyses tRNA(Val) + L-valine + ATP = L-valyl-tRNA(Val) + AMP + diphosphate. Its function is as follows. Catalyzes the attachment of valine to tRNA(Val). As ValRS can inadvertently accommodate and process structurally similar amino acids such as threonine, to avoid such errors, it has a 'posttransfer' editing activity that hydrolyzes mischarged Thr-tRNA(Val) in a tRNA-dependent manner. The chain is Valine--tRNA ligase from Parabacteroides distasonis (strain ATCC 8503 / DSM 20701 / CIP 104284 / JCM 5825 / NCTC 11152).